Here is a 201-residue protein sequence, read N- to C-terminus: CASP-like protein 2D1 (201 aa).

Topologically, residues 1 to 26 are cytoplasmic; it reads MRSGEGSTAAAAAAEEEKVKVAAPFR. The helical transmembrane segment at 27-47 threads the bilayer; sequence LAELGLRVCAVPLAVASVWEM. At 48 to 70 the chain is on the extracellular side; the sequence is ATNKQVDETYGEVRFSDLSGFRY. A helical membrane pass occupies residues 71 to 91; that stretch reads LVWINAITAAYSVASILLSSC. Residues 92–98 lie on the Cytoplasmic side of the membrane; that stretch reads RFITRFD. The helical transmembrane segment at 99–119 threads the bilayer; the sequence is WLIFILDQASAYLLLTSASAA. Over 120-148 the chain is Extracellular; sequence AEVVYLAREGDREVSWGEVCSYFGRFCGA. The chain crosses the membrane as a helical span at residues 149 to 169; it reads ATVSVALNAAALLCFMALSLI. At 170 to 201 the chain is on the cytoplasmic side; it reads SAFRVFTKFNPPSQSNSKQQLSQEQGKPVVSG. Residues 180–194 show a composition bias toward polar residues; sequence PPSQSNSKQQLSQEQ. Residues 180 to 201 are disordered; sequence PPSQSNSKQQLSQEQGKPVVSG.

It belongs to the Casparian strip membrane proteins (CASP) family. In terms of assembly, homodimer and heterodimers.

It is found in the cell membrane. This is CASP-like protein 2D1 from Oryza sativa subsp. indica (Rice).